A 591-amino-acid chain; its full sequence is Nuclear receptor subfamily 4 group A member 2 (591 aa).

Disordered regions lie at residues 1-22 (MPCV…SQSY) and 110-133 (SEEM…SSTP). Residues 8-22 (YGSSPQGASPASQSY) are compositionally biased toward low complexity. Positions 253-328 (EGLCAVCGDN…VGMVKEVVRT (76 aa)) form a DNA-binding region, nuclear receptor. 2 NR C4-type zinc fingers span residues 256–276 (CAVC…CEGC) and 292–311 (CLAN…CQYC). Positions 280–307 (FKRTVQKNAKYVCLANKNCPVDKRRRNR) match the Bipartite nuclear localization signal (NLS1) motif. Residues 330 to 354 (SLKGRRGRLPSKPKSPQEPSPPSPP) form a disordered region. A Nuclear localization signal (NLS1) motif is present at residues 331–343 (LKGRRGRLPSKPK). A compositionally biased stretch (pro residues) spans 345-354 (PQEPSPPSPP). The region spanning 353-588 (PPVSLISALV…AIIDKLFLDT (236 aa)) is the NR LBD domain. The nuclear export sequence (NES1) signature appears at 436–445 (FLELFVLRLA). Residues 561-570 (QGLQRIFYLK) carry the nuclear export sequence (NES2) motif.

The protein belongs to the nuclear hormone receptor family.

Its subcellular location is the cytoplasm. The protein resides in the nucleus. In terms of biological role, transcriptional regulator which may play a role in the differentiation and maintenance of meso-diencephalic dopaminergic (mdDA) neurons. This chain is Nuclear receptor subfamily 4 group A member 2 (nr4a2), found in Xenopus tropicalis (Western clawed frog).